A 183-amino-acid polypeptide reads, in one-letter code: Ribosome rescue factor SmrB (183 aa).

Positions 98 to 173 (LDLHGLTQMQ…GDAALLVLIE (76 aa)) constitute a Smr domain.

The protein belongs to the SmrB family. Associates with collided ribosomes, but not with correctly translating polysomes.

Its function is as follows. Acts as a ribosome collision sensor. Detects stalled/collided disomes (pairs of ribosomes where the leading ribosome is stalled and a second ribosome has collided with it) and endonucleolytically cleaves mRNA at the 5' boundary of the stalled ribosome. Stalled/collided disomes form a new interface (primarily via the 30S subunits) that binds SmrB. Cleaved mRNA becomes available for tmRNA ligation, leading to ribosomal subunit dissociation and rescue of stalled ribosomes. The polypeptide is Ribosome rescue factor SmrB (Enterobacter sp. (strain 638)).